Reading from the N-terminus, the 351-residue chain is MIVQRVVLNSRPGKNGNPVAENFRMEEVYLPDNINEGQVQVRTLYLSVDPYMRCRMNEDTGTDYITPWQLSQVVDGGGIGIIEESKHTNLTKGDFVTSFYWPWQTKVILDGNSLEKVDPQLVDGHLSYFLGAIGMPGLTSLIGIQEKGHITAGSNKTMVVSGAAGACGSVAGQIGHLLGCSRVVGICGTHEKCVLLTSELGFDAAINYKKDNVAEQLRESCPAGVDVYFDNVGGNISDTVISQMNENSHIILCGQISQYNKDVPYPPPLSPAIEAIQKERNITRERFLVLNYRDKFEPGILQLSQWFKEGKLKIKETVINGLENMGAAFQSMMTGGNIGKQIVCISEEISL.

99 to 100 (FY) contributes to the substrate binding site. Residues 165–168 (GACG), Lys-192, Tyr-208, Asn-231, 253–259 (CGQISQY), 287–289 (FLV), and Asn-337 each bind NADP(+). 288-290 (LVL) contributes to the substrate binding site.

Belongs to the NADP-dependent oxidoreductase L4BD family. Monomer.

Its subcellular location is the cytoplasm. The enzyme catalyses 13,14-dihydro-15-oxo-prostaglandin E2 + NAD(+) = 15-oxoprostaglandin E2 + NADH + H(+). It carries out the reaction 13,14-dihydro-15-oxo-prostaglandin E2 + NADP(+) = 15-oxoprostaglandin E2 + NADPH + H(+). The catalysed reaction is 13,14-dihydro-15-oxo-PGF2alpha + NADP(+) = 15-oxoprostaglandin F2alpha + NADPH + H(+). It catalyses the reaction 13,14-dihydro-15-oxo-prostaglandin E1 + NADP(+) = 15-oxoprostaglandin E1 + NADPH + H(+). The enzyme catalyses 13,14-dihydro-15-oxo-prostaglandin F1alpha + NADP(+) = 15-oxoprostaglandin F1alpha + NADPH + H(+). Its function is as follows. Functions as 15-oxo-prostaglandin 13-reductase and acts on 15-keto-PGE1, 15-keto-PGE2, 15-keto-PGE1-alpha and 15-keto-PGE2-alpha with highest activity towards 15-keto-PGE2. Overexpression represses transcriptional activity of PPARG and inhibits adipocyte differentiation. This is Prostaglandin reductase 2 (PTGR2) from Pongo abelii (Sumatran orangutan).